The sequence spans 60 residues: Translational regulator CsrA (60 aa).

It belongs to the CsrA/RsmA family. As to quaternary structure, homodimer; the beta-strands of each monomer intercalate to form a hydrophobic core, while the alpha-helices form wings that extend away from the core.

The protein resides in the cytoplasm. Functionally, a key translational regulator that binds mRNA to regulate translation initiation and/or mRNA stability. Mediates global changes in gene expression, shifting from rapid growth to stress survival by linking envelope stress, the stringent response and the catabolite repression systems. Usually binds in the 5'-UTR; binding at or near the Shine-Dalgarno sequence prevents ribosome-binding, repressing translation, binding elsewhere in the 5'-UTR can activate translation and/or stabilize the mRNA. Its function is antagonized by small RNA(s). This is Translational regulator CsrA from Histophilus somni (strain 2336) (Haemophilus somnus).